Consider the following 719-residue polypeptide: DNA replication licensing factor MCM7 (719 aa).

Ala-2 carries the N-acetylalanine modification. Glycyl lysine isopeptide (Lys-Gly) (interchain with G-Cter in SUMO2) cross-links involve residues Lys-15 and Lys-28. Ser-314 carries the phosphoserine modification. In terms of domain architecture, MCM spans 332 to 538 (FYEKLAASIA…NDLRLAQHIT (207 aa)). Tyr-345 serves as a coordination point for ATP. The residue at position 365 (Ser-365) is a Phosphoserine. Positions 384, 386, 387, 388, and 489 each coordinate ATP. Ser-500 is modified (phosphoserine). An Arginine finger motif is present at residues 513–516 (SRFD). Arg-514 lines the ATP pocket. The interval 521-564 (IQDRPDRDNDLRLAQHITYVHQHSRQPPAQFEPLDMKLMRRYIA) is interaction with RAD17. Positions 577–719 (LADYITAAYV…NTSRTRITFV (143 aa)) are interaction with ATRIP. Arg-604 contributes to the ATP binding site. Ser-678 is subject to Phosphoserine.

Belongs to the MCM family. In terms of assembly, component of the MCM2-7 complex. The complex forms a toroidal hexameric ring with the proposed subunit order MCM2-MCM6-MCM4-MCM7-MCM3-MCM5. Component of the CMG helicase complex, a hexameric ring of related MCM2-7 subunits stabilized by CDC45 and the tetrameric GINS complex. Interacts with the ATR-ATRIP complex and with RAD17. Interacts with TIPIN. Interacts with MCMBP. Interacts with ANKRD17. Component of the replisome complex composed of at least DONSON, MCM2, MCM7, PCNA and TICRR. Post-translationally, O-glycosylated (O-GlcNAcylated), in a cell cycle-dependent manner. In terms of processing, ubiquitinated by ECS(LRR1) E3 ubiquitin-protein ligase complex when forks converge following formation of DNA interstrand cross-links. During mitosis, ubiquitinated by TRAIP when forks converge following formation of DNA interstrand cross-links. Short ubiquitin chains on MCM7 promote recruitment of DNA glycosylase NEIL3. If the interstrand cross-link cannot be cleaved by NEIL3, the ubiquitin chains continue to grow on MCM7, promoting the unloading of the CMG helicase complex by the VCP/p97 ATPase.

The protein resides in the nucleus. It is found in the chromosome. The catalysed reaction is ATP + H2O = ADP + phosphate + H(+). In terms of biological role, acts as a component of the MCM2-7 complex (MCM complex) which is the replicative helicase essential for 'once per cell cycle' DNA replication initiation and elongation in eukaryotic cells. Core component of CDC45-MCM-GINS (CMG) helicase, the molecular machine that unwinds template DNA during replication, and around which the replisome is built. The active ATPase sites in the MCM2-7 ring are formed through the interaction surfaces of two neighboring subunits such that a critical structure of a conserved arginine finger motif is provided in trans relative to the ATP-binding site of the Walker A box of the adjacent subunit. The six ATPase active sites, however, are likely to contribute differentially to the complex helicase activity. Uncomplexed form does not show ATPase or DNA helicase. Required for S-phase checkpoint activation upon UV-induced damage. This is DNA replication licensing factor MCM7 (Mcm7) from Mus musculus (Mouse).